We begin with the raw amino-acid sequence, 1031 residues long: Error-prone DNA polymerase (1031 aa).

The protein belongs to the DNA polymerase type-C family. DnaE2 subfamily.

It is found in the cytoplasm. The enzyme catalyses DNA(n) + a 2'-deoxyribonucleoside 5'-triphosphate = DNA(n+1) + diphosphate. Functionally, DNA polymerase involved in damage-induced mutagenesis and translesion synthesis (TLS). It is not the major replicative DNA polymerase. The protein is Error-prone DNA polymerase of Pseudomonas syringae pv. syringae (strain B728a).